The primary structure comprises 424 residues: Putative chloroquine resistance transporter (424 aa).

The Cytoplasmic portion of the chain corresponds to 1-56; that stretch reads MTGMKKGKNKKKNVKNDERYKELDSLISNDSEIGNNSRWGGAKRICKLIGNEMRNN. Residues 57–77 form a helical membrane-spanning segment; that stretch reads IYVYLLSILYLCVSVMNKVFS. Topologically, residues 78-88 are vacuolar; the sequence is KRTLNKIGNYS. N86 carries N-linked (GlcNAc...) asparagine glycosylation. The helical transmembrane segment at 89–109 threads the bilayer; that stretch reads FVTSEVHNMICTIVFQLLYFI. The Cytoplasmic portion of the chain corresponds to 110 to 125; it reads YRKTSNPASRNESQKN. The chain crosses the membrane as a helical span at residues 126 to 146; sequence FGWQFFLISLLDASTVIITMI. Topologically, residues 147–156 are vacuolar; that stretch reads GLTRTTGNIQ. Residues 157–177 form a helical membrane-spanning segment; it reads SFIMQLIIPVNMYFCFIFLGY. The Cytoplasmic portion of the chain corresponds to 178 to 180; sequence RYH. The chain crosses the membrane as a helical span at residues 181–201; that stretch reads LFNYLGAFIILITIAAVETVL. Residues 202 to 209 are Vacuolar-facing; it reads SYETQSDN. Residues 210-230 traverse the membrane as a helical segment; the sequence is SIIFNLIMIFALIPLSFSNMT. Residues 231–248 lie on the Cytoplasmic side of the membrane; sequence REVVFKKHKINIIRLNAM. A helical transmembrane segment spans residues 249–269; sequence VALFQFFTSLLVLPVYNISFL. The Vacuolar segment spans residues 270–317; it reads KEIYMPFSEMGTNINDGLRCLFYGQSTIVENCGVGMVKMCDQCEGAWK. Disulfide bonds link C289–C312 and C301–C309. A helical membrane pass occupies residues 318-338; the sequence is TFITYSFFNICDNLLVCYIID. Over 339 to 346 the chain is Cytoplasmic; the sequence is KFSTMTYT. The helical transmembrane segment at 347 to 367 threads the bilayer; it reads IVSCIQGPAITIAYYFKFLAG. Topologically, residues 368–377 are vacuolar; the sequence is DVVRQPRLLD. A helical transmembrane segment spans residues 378-398; sequence FLTLFGYLLGTIIYRIGNIIL. The Cytoplasmic segment spans residues 399-424; the sequence is EKKKMLKALNTDGSEAELTSIETSTA.

Belongs to the CRT-like transporter family.

It is found in the vacuole membrane. In terms of biological role, nutrient transporter. Involved in maintaining the osmotic homeostasis of the digestive vacuole. This is Putative chloroquine resistance transporter from Plasmodium chabaudi.